A 333-amino-acid polypeptide reads, in one-letter code: Starch-binding domain-containing protein 1 (333 aa).

Residues M1 to S6 are Extracellular-facing. Residues A7–L23 traverse the membrane as a helical segment. Residues R24–H333 lie on the Cytoplasmic side of the membrane. Disordered stretches follow at residues G31–S73 and N106–E139. Positions P50 to G61 are enriched in gly residues. Phosphoserine is present on S67. Residues N124 to E134 show a composition bias toward polar residues. Phosphoserine occurs at positions 135 and 162. The LIR motif lies at H181–V187. 7 positions are modified to phosphoserine: S191, S192, S201, S205, S208, S216, and S219. Residues S233 to I332 form the CBM20 domain.

Interacts with the ATG8 family proteins GABARAP and GABARAPL1. Interacts with several glycogen-associated proteins, such as GYS2 (liver glycogen synthase), GDE (glycogen debranching enzyme), GBE1 (glycogen branching enzyme 1) and EPM2A (Laforin). In terms of processing, ubiquitinated, which leads to proteasomal degradation.

The protein resides in the preautophagosomal structure membrane. It is found in the endoplasmic reticulum membrane. It localises to the cell membrane. Its subcellular location is the sarcolemma. The protein localises to the T-tubule. Acts as a cargo receptor for glycogen. Delivers its cargo to an autophagic pathway called glycophagy, resulting in the transport of glycogen to lysosomes. In Rattus norvegicus (Rat), this protein is Starch-binding domain-containing protein 1.